The chain runs to 615 residues: DNA mismatch repair protein MutL (615 aa).

Residues 362–397 (HFAEPAVREPVAPRYSPAPASGGRPAASWPNAQPGY) are disordered. Over residues 378-391 (PAPASGGRPAASWP) the composition is skewed to low complexity.

The protein belongs to the DNA mismatch repair MutL/HexB family.

Its function is as follows. This protein is involved in the repair of mismatches in DNA. It is required for dam-dependent methyl-directed DNA mismatch repair. May act as a 'molecular matchmaker', a protein that promotes the formation of a stable complex between two or more DNA-binding proteins in an ATP-dependent manner without itself being part of a final effector complex. The sequence is that of DNA mismatch repair protein MutL from Escherichia fergusonii (strain ATCC 35469 / DSM 13698 / CCUG 18766 / IAM 14443 / JCM 21226 / LMG 7866 / NBRC 102419 / NCTC 12128 / CDC 0568-73).